The following is a 266-amino-acid chain: uncharacterized protein (266 aa).

This is an uncharacterized protein from Ostreid herpesvirus 1 (isolate France) (OsHV-1).